The chain runs to 99 residues: Aspartyl/glutamyl-tRNA(Asn/Gln) amidotransferase subunit C (99 aa).

This sequence belongs to the GatC family. As to quaternary structure, heterotrimer of A, B and C subunits.

It carries out the reaction L-glutamyl-tRNA(Gln) + L-glutamine + ATP + H2O = L-glutaminyl-tRNA(Gln) + L-glutamate + ADP + phosphate + H(+). It catalyses the reaction L-aspartyl-tRNA(Asn) + L-glutamine + ATP + H2O = L-asparaginyl-tRNA(Asn) + L-glutamate + ADP + phosphate + 2 H(+). Its function is as follows. Allows the formation of correctly charged Asn-tRNA(Asn) or Gln-tRNA(Gln) through the transamidation of misacylated Asp-tRNA(Asn) or Glu-tRNA(Gln) in organisms which lack either or both of asparaginyl-tRNA or glutaminyl-tRNA synthetases. The reaction takes place in the presence of glutamine and ATP through an activated phospho-Asp-tRNA(Asn) or phospho-Glu-tRNA(Gln). This chain is Aspartyl/glutamyl-tRNA(Asn/Gln) amidotransferase subunit C, found in Corynebacterium diphtheriae (strain ATCC 700971 / NCTC 13129 / Biotype gravis).